Consider the following 202-residue polypeptide: Succinate dehydrogenase cytochrome b558 subunit (202 aa).

A run of 5 helical transmembrane segments spans residues 12–31, 60–79, 93–113, 135–155, and 178–196; these read LHSLLGVIPVGIFLIQHLVV, IFIIFLPLIYHAVYGVYIAF, NWLFVLQRVTGIITLIFVSWH, ILSSPAMLGFYIVGVLSTIFH, and ISTYVTLIIFVALSYVGLK. Residues His-28, His-70, His-113, and His-155 each contribute to the heme site.

The protein belongs to the cytochrome b558 family. In terms of assembly, part of an enzyme complex containing three subunits: a flavoprotein, an iron-sulfur protein and cytochrome b-558.

It localises to the cell membrane. The protein operates within carbohydrate metabolism; tricarboxylic acid cycle. Its function is as follows. Di-heme cytochrome of the succinate dehydrogenase complex. This Bacillus subtilis (strain 168) protein is Succinate dehydrogenase cytochrome b558 subunit (sdhC).